The chain runs to 252 residues: Imidazole glycerol phosphate synthase subunit HisF (252 aa).

Active-site residues include aspartate 11 and aspartate 130.

The protein belongs to the HisA/HisF family. As to quaternary structure, heterodimer of HisH and HisF.

It is found in the cytoplasm. The catalysed reaction is 5-[(5-phospho-1-deoxy-D-ribulos-1-ylimino)methylamino]-1-(5-phospho-beta-D-ribosyl)imidazole-4-carboxamide + L-glutamine = D-erythro-1-(imidazol-4-yl)glycerol 3-phosphate + 5-amino-1-(5-phospho-beta-D-ribosyl)imidazole-4-carboxamide + L-glutamate + H(+). It functions in the pathway amino-acid biosynthesis; L-histidine biosynthesis; L-histidine from 5-phospho-alpha-D-ribose 1-diphosphate: step 5/9. Functionally, IGPS catalyzes the conversion of PRFAR and glutamine to IGP, AICAR and glutamate. The HisF subunit catalyzes the cyclization activity that produces IGP and AICAR from PRFAR using the ammonia provided by the HisH subunit. The chain is Imidazole glycerol phosphate synthase subunit HisF from Staphylococcus aureus (strain bovine RF122 / ET3-1).